The chain runs to 197 residues: Large ribosomal subunit protein uL10 (197 aa).

Residues 162-197 (GGASAPAAEEAPAAEEAAAEEVAAPAEAAEAATEEN) are disordered. Low complexity predominate over residues 163-197 (GASAPAAEEAPAAEEAAAEEVAAPAEAAEAATEEN).

Belongs to the universal ribosomal protein uL10 family. In terms of assembly, part of the ribosomal stalk of the 50S ribosomal subunit. The N-terminus interacts with L11 and the large rRNA to form the base of the stalk. The C-terminus forms an elongated spine to which L12 dimers bind in a sequential fashion forming a multimeric L10(L12)X complex.

Its function is as follows. Forms part of the ribosomal stalk, playing a central role in the interaction of the ribosome with GTP-bound translation factors. This is Large ribosomal subunit protein uL10 from Paenarthrobacter aurescens (strain TC1).